The following is a 203-amino-acid chain: N-(5'-phosphoribosyl)anthranilate isomerase (203 aa).

This sequence belongs to the TrpF family.

The catalysed reaction is N-(5-phospho-beta-D-ribosyl)anthranilate = 1-(2-carboxyphenylamino)-1-deoxy-D-ribulose 5-phosphate. It participates in amino-acid biosynthesis; L-tryptophan biosynthesis; L-tryptophan from chorismate: step 3/5. The protein is N-(5'-phosphoribosyl)anthranilate isomerase of Thermoanaerobacter pseudethanolicus (strain ATCC 33223 / 39E) (Clostridium thermohydrosulfuricum).